Reading from the N-terminus, the 200-residue chain is Holliday junction branch migration complex subunit RuvA (200 aa).

The segment at 1-64 is domain I; that stretch reads MIAHLTGLVG…EDAFLLYGFA (64 aa). The domain II stretch occupies residues 65–143; that stretch reads EAAERDWFRL…RMPAGPGVTI (79 aa). Residues 144–147 form a flexible linker region; the sequence is AAPP. Positions 148–200 are domain III; the sequence is ASGGVEADALLALAGLGFRRAEAQPVVGRILARLDGKADLDVVIRESLRELAR.

Belongs to the RuvA family. In terms of assembly, homotetramer. Forms an RuvA(8)-RuvB(12)-Holliday junction (HJ) complex. HJ DNA is sandwiched between 2 RuvA tetramers; dsDNA enters through RuvA and exits via RuvB. An RuvB hexamer assembles on each DNA strand where it exits the tetramer. Each RuvB hexamer is contacted by two RuvA subunits (via domain III) on 2 adjacent RuvB subunits; this complex drives branch migration. In the full resolvosome a probable DNA-RuvA(4)-RuvB(12)-RuvC(2) complex forms which resolves the HJ.

It is found in the cytoplasm. In terms of biological role, the RuvA-RuvB-RuvC complex processes Holliday junction (HJ) DNA during genetic recombination and DNA repair, while the RuvA-RuvB complex plays an important role in the rescue of blocked DNA replication forks via replication fork reversal (RFR). RuvA specifically binds to HJ cruciform DNA, conferring on it an open structure. The RuvB hexamer acts as an ATP-dependent pump, pulling dsDNA into and through the RuvAB complex. HJ branch migration allows RuvC to scan DNA until it finds its consensus sequence, where it cleaves and resolves the cruciform DNA. The polypeptide is Holliday junction branch migration complex subunit RuvA (Gluconacetobacter diazotrophicus (strain ATCC 49037 / DSM 5601 / CCUG 37298 / CIP 103539 / LMG 7603 / PAl5)).